The primary structure comprises 153 residues: Aspartate carbamoyltransferase regulatory chain (153 aa).

Zn(2+)-binding residues include C110, C115, C138, and C141.

The protein belongs to the PyrI family. Contains catalytic and regulatory chains. Zn(2+) serves as cofactor.

Its function is as follows. Involved in allosteric regulation of aspartate carbamoyltransferase. The sequence is that of Aspartate carbamoyltransferase regulatory chain from Bacteroides fragilis (strain ATCC 25285 / DSM 2151 / CCUG 4856 / JCM 11019 / LMG 10263 / NCTC 9343 / Onslow / VPI 2553 / EN-2).